Consider the following 141-residue polypeptide: MIFVSKVHGNIEYEEKDKITFKKGILGFENLKEYALVDLKECEPFKLLQSLEDDEAGLIVVCPFEFFKEYEIKLSDEDTTRLDVKNQSDVVLLTTVTLDSDPKKITTNLKAPIIINISNNLGEQIILDKSDYKIKHLLIEE.

Belongs to the FliW family. Interacts with translational regulator CsrA and flagellin(s).

Its subcellular location is the cytoplasm. Its function is as follows. Acts as an anti-CsrA protein, binds CsrA and prevents it from repressing translation of its target genes, one of which is flagellin. Binds to flagellin and participates in the assembly of the flagellum. The chain is Flagellar assembly factor FliW from Clostridium botulinum (strain Alaska E43 / Type E3).